A 160-amino-acid chain; its full sequence is DNA topoisomerase small subunit (160 aa).

In terms of assembly, part of the DNA topoisomerase complex made of gp39, gp52 and gp60. Mg(2+) is required as a cofactor.

It catalyses the reaction ATP-dependent breakage, passage and rejoining of double-stranded DNA.. In terms of biological role, small subunit of the DNA topoisomerase that untwists superhelical DNA. Controls topological states of double-stranded DNA by transient breakage and subsequent rejoining of DNA strands. The sequence is that of DNA topoisomerase small subunit (60) from Enterobacteria phage T4 (Bacteriophage T4).